Reading from the N-terminus, the 164-residue chain is FMN reductase (NADH) RutF (164 aa).

It belongs to the non-flavoprotein flavin reductase family. RutF subfamily.

The catalysed reaction is FMNH2 + NAD(+) = FMN + NADH + 2 H(+). In terms of biological role, catalyzes the reduction of FMN to FMNH2 which is used to reduce pyrimidine by RutA via the Rut pathway. This Klebsiella pneumoniae (strain 342) protein is FMN reductase (NADH) RutF.